Here is a 202-residue protein sequence, read N- to C-terminus: uncharacterized protein (202 aa).

The interval 164–202 (DTDSEQESDQESDQDSDQESEESDQESDQDSDQDSEGSE) is disordered. Residues 165 to 202 (TDSEQESDQESDQDSDQESEESDQESDQDSDQDSEGSE) are compositionally biased toward acidic residues.

This is an uncharacterized protein from Acanthamoeba polyphaga mimivirus (APMV).